The following is a 209-amino-acid chain: Ribosomal RNA large subunit methyltransferase E (209 aa).

S-adenosyl-L-methionine-binding residues include Gly-63, Trp-65, Asp-83, Asp-99, and Asp-124. Lys-164 (proton acceptor) is an active-site residue.

Belongs to the class I-like SAM-binding methyltransferase superfamily. RNA methyltransferase RlmE family.

The protein resides in the cytoplasm. The enzyme catalyses uridine(2552) in 23S rRNA + S-adenosyl-L-methionine = 2'-O-methyluridine(2552) in 23S rRNA + S-adenosyl-L-homocysteine + H(+). Functionally, specifically methylates the uridine in position 2552 of 23S rRNA at the 2'-O position of the ribose in the fully assembled 50S ribosomal subunit. The sequence is that of Ribosomal RNA large subunit methyltransferase E from Proteus mirabilis (strain HI4320).